We begin with the raw amino-acid sequence, 327 residues long: Serpentine receptor class alpha-12 (327 aa).

Residues 1 to 18 (MGCASEIQAEIFTSFGQL) are Extracellular-facing. A helical membrane pass occupies residues 19–39 (FYASFQTILFLATIIGSLLAI). At 40 to 53 (FELCKKTTVPDSTR) the chain is on the cytoplasmic side. Residues 54–74 (VLLIGSLFFANAHEFAYFTAP) form a helical membrane-spanning segment. Residues 75 to 98 (LKVFQLNIFNTNTSCYPLISTRDC) lie on the Extracellular side of the membrane. A helical membrane pass occupies residues 99–119 (IPTTTVLAMGISGNMLIQSAL). Residues 120 to 138 (SIDRLLATIFPFSYSRMRA) lie on the Cytoplasmic side of the membrane. A helical transmembrane segment spans residues 139–159 (LPGFVLLIMVLIPAMFTYSWI). The Extracellular portion of the chain corresponds to 160-185 (RLDIVLDDYQMFCSQWSANISTRANT). A helical transmembrane segment spans residues 186 to 206 (FLEICSYLTVAHIIINCLIIL). The Cytoplasmic portion of the chain corresponds to 207–234 (RNRAIEKRCRFDVTQRYLTSENLKTTQA). The helical transmembrane segment at 235 to 255 (ICYLSIAQFLAMFMYSGGVLL) threads the bilayer. The Extracellular segment spans residues 256–270 (MRKNRENIPTLIYFN). The helical transmembrane segment at 271–291 (VIVWVYAPPYACVSLAPLILF) threads the bilayer. Residues 292–327 (SLWNLKKQRHIQIKSVQSAQKETQDDYIRKLQKSWK) are Cytoplasmic-facing.

It belongs to the nematode receptor-like protein sra family. In terms of tissue distribution, expressed in neurons RIF/RIG and PVT.

The protein localises to the membrane. This Caenorhabditis elegans protein is Serpentine receptor class alpha-12 (sra-12).